A 396-amino-acid polypeptide reads, in one-letter code: Actin-related protein 6 (396 aa).

An N-acetylthreonine modification is found at threonine 2. Residue lysine 260 is modified to N6-acetyllysine.

The protein belongs to the actin family. ARP6 subfamily. In terms of assembly, component of the chromatin-remodeling SRCAP complex composed of at least SRCAP, DMAP1, RUVBL1, RUVBL2, ACTL6A, YEATS4, ACTR6 and ZNHIT1. Interacts with CBX1, CBX3 and CBX5.

It localises to the cytoplasm. It is found in the cytoskeleton. The protein localises to the nucleus. Its subcellular location is the nucleolus. Functionally, required for formation and/or maintenance of proper nucleolar structure and function. Plays a dual role in the regulation of ribosomal DNA (rDNA) transcription. In the presence of high glucose, maintains active rDNA transcription through H2A.Z deposition and under glucose starvation, is required for the repression of rDNA transcription, and this function may be independent of H2A.Z. This is Actin-related protein 6 (Actr6) from Mus musculus (Mouse).